The primary structure comprises 203 residues: Large ribosomal subunit protein bL25 (203 aa).

The protein belongs to the bacterial ribosomal protein bL25 family. CTC subfamily. In terms of assembly, part of the 50S ribosomal subunit; part of the 5S rRNA/L5/L18/L25 subcomplex. Contacts the 5S rRNA. Binds to the 5S rRNA independently of L5 and L18.

This is one of the proteins that binds to the 5S RNA in the ribosome where it forms part of the central protuberance. The chain is Large ribosomal subunit protein bL25 from Pseudomonas savastanoi pv. phaseolicola (strain 1448A / Race 6) (Pseudomonas syringae pv. phaseolicola (strain 1448A / Race 6)).